Here is a 392-residue protein sequence, read N- to C-terminus: Phosphopentomutase (392 aa).

The Mn(2+) site is built by Asp-13, Asp-286, His-291, Asp-327, His-328, and His-339.

Belongs to the phosphopentomutase family. Mn(2+) serves as cofactor.

The protein resides in the cytoplasm. The enzyme catalyses 2-deoxy-alpha-D-ribose 1-phosphate = 2-deoxy-D-ribose 5-phosphate. It catalyses the reaction alpha-D-ribose 1-phosphate = D-ribose 5-phosphate. It participates in carbohydrate degradation; 2-deoxy-D-ribose 1-phosphate degradation; D-glyceraldehyde 3-phosphate and acetaldehyde from 2-deoxy-alpha-D-ribose 1-phosphate: step 1/2. Isomerase that catalyzes the conversion of deoxy-ribose 1-phosphate (dRib-1-P) and ribose 1-phosphate (Rib-1-P) to deoxy-ribose 5-phosphate (dRib-5-P) and ribose 5-phosphate (Rib-5-P), respectively. This Oceanobacillus iheyensis (strain DSM 14371 / CIP 107618 / JCM 11309 / KCTC 3954 / HTE831) protein is Phosphopentomutase.